Reading from the N-terminus, the 322-residue chain is Probable F-box protein At1g60180 (322 aa).

In terms of domain architecture, F-box spans 45–88 (FCELSDECIAKILSGCPILESLTLSHCIYLTVLDLSKSLRLRTL).

In Arabidopsis thaliana (Mouse-ear cress), this protein is Probable F-box protein At1g60180.